The sequence spans 394 residues: 1-deoxy-D-xylulose 5-phosphate reductoisomerase (394 aa).

Residues Thr13, Gly14, Thr15, Ile16, and Asn125 each contribute to the NADPH site. Residue Lys126 participates in 1-deoxy-D-xylulose 5-phosphate binding. Glu127 provides a ligand contact to NADPH. Asp151 contacts Mn(2+). 4 residues coordinate 1-deoxy-D-xylulose 5-phosphate: Ser152, Glu153, Ser182, and His205. Glu153 lines the Mn(2+) pocket. Residue Gly211 coordinates NADPH. Ser218, Asn223, Lys224, and Glu227 together coordinate 1-deoxy-D-xylulose 5-phosphate. A Mn(2+)-binding site is contributed by Glu227.

It belongs to the DXR family. Mg(2+) is required as a cofactor. The cofactor is Mn(2+).

It catalyses the reaction 2-C-methyl-D-erythritol 4-phosphate + NADP(+) = 1-deoxy-D-xylulose 5-phosphate + NADPH + H(+). It participates in isoprenoid biosynthesis; isopentenyl diphosphate biosynthesis via DXP pathway; isopentenyl diphosphate from 1-deoxy-D-xylulose 5-phosphate: step 1/6. Functionally, catalyzes the NADPH-dependent rearrangement and reduction of 1-deoxy-D-xylulose-5-phosphate (DXP) to 2-C-methyl-D-erythritol 4-phosphate (MEP). The sequence is that of 1-deoxy-D-xylulose 5-phosphate reductoisomerase from Methylobacillus flagellatus (strain ATCC 51484 / DSM 6875 / VKM B-1610 / KT).